Consider the following 428-residue polypeptide: Serine--tRNA ligase (428 aa).

Position 234-236 (234-236 (TAE)) interacts with L-serine. 265–267 (RRE) contributes to the ATP binding site. Position 288 (E288) interacts with L-serine. 352–355 (EISS) is a binding site for ATP. S388 serves as a coordination point for L-serine.

It belongs to the class-II aminoacyl-tRNA synthetase family. Type-1 seryl-tRNA synthetase subfamily. Homodimer. The tRNA molecule binds across the dimer.

It is found in the cytoplasm. It catalyses the reaction tRNA(Ser) + L-serine + ATP = L-seryl-tRNA(Ser) + AMP + diphosphate + H(+). It carries out the reaction tRNA(Sec) + L-serine + ATP = L-seryl-tRNA(Sec) + AMP + diphosphate + H(+). It participates in aminoacyl-tRNA biosynthesis; selenocysteinyl-tRNA(Sec) biosynthesis; L-seryl-tRNA(Sec) from L-serine and tRNA(Sec): step 1/1. Catalyzes the attachment of serine to tRNA(Ser). Is also able to aminoacylate tRNA(Sec) with serine, to form the misacylated tRNA L-seryl-tRNA(Sec), which will be further converted into selenocysteinyl-tRNA(Sec). This is Serine--tRNA ligase from Synechococcus elongatus (strain ATCC 33912 / PCC 7942 / FACHB-805) (Anacystis nidulans R2).